We begin with the raw amino-acid sequence, 701 residues long: MATTHTLLSFDNLEFLLHRKDLTDLYGKRCGTLNLVINPYELFLPDELDDDCCDDPFNCCFSDVYASIGTEYSYIDPPDLIYEEHCATNGTWPDGTPCEPILPPFTITGTHHYYATKPGEVVSGILSKLRVFLGSLLRSTADVNSNFTFRAESDGPGSTEIVTEEQGTIVQQQPAPAPTALATLATASTGKSVEQEWMTFFSYHTSINWSTVESQGKVLYSQALNPSINPYLDHISKLYSTWSGGIDVRFTVSGSGVFGGKLAALLVPPGVEPIESVSMLQYPHVLFDARQTEPVIFTIPDIRKTLFHSMDETDTTKLVIMVYKNGADTKTTCSITVETRPSADFTFALLKPPGSLIKHGSIPSDLIPRNSAHWLGNRWWSMISGFSVQPRVFQSNRHFDFDSTTTGWSTPYYIPIEITITAKVKGNNHWYHVIAHDKALVPGIPDGWPDTTIPSEVHASNGNFDYAKGFHDDKEIVNPANNNTHFKGTYICGTLSTIKDPEKAENQSESQKKSSTMYVATADLGDNKVKPQHKISSQKLVVYFDGPEKDLTMNATLSPLGYTLVDDQPIGSNSSTVVRIATLPEAFTQGGNYPIFYVNKTNKGYFDKATTDCYNSQILMTSQRLAEGNYSLPPDSLAVYRITDSSSQWFDIGINHDGFSYVGLPDLPADLTFPLTSTFMGVQLARVKLASKVKVTRNSIK.

This sequence belongs to the caliciviridae capsid protein family. In terms of assembly, homodimer. Homomultimer. Interacts with the minor capsid protein VP2. May bind to VP3 and Vpg proteins. Cleaved by the viral protease to produce mature capsid protein.

It localises to the virion. Its subcellular location is the host cytoplasm. Functionally, capsid protein self assembles to form an icosahedral capsid with a T=3 symmetry, about 38 nm in diameter, and consisting of 180 capsid proteins. A smaller form of capsid with a diameter of 23 nm might be capsid proteins assembled as icosahedron with T=1 symmetry. The capsid encapsulates the genomic RNA and is decorated with VP2 proteins. The protein is Capsid protein VP1 of Vesicular exanthema of swine virus serotype A48 (isolate Swine/United States/A48/1948) (VESV).